The following is a 161-amino-acid chain: E3 ubiquitin ligase complex SCF subunit sconC (161 aa).

Residues 102-161 form an interaction with the F-box domain of F-box proteins region; the sequence is ILAANYLDIKGLLDVGCKTVANMIKGKSPEEIRKTFNIQNDFTPEEEDQIRRENEWAEDR.

This sequence belongs to the SKP1 family. Component of the SCF (SKP1-CUL1-F-box protein) E3 ubiquitin ligase complexes.

It participates in protein modification; protein ubiquitination. Functionally, essential component of the SCF (SKP1-CUL1-F-box protein) E3 ubiquitin ligase complexes, which mediate the ubiquitination and subsequent proteasomal degradation of target proteins. Controls sulfur metabolite repression, probably by mediating the inactivation or degradation of the metR transcription factor. In Aspergillus flavus (strain ATCC 200026 / FGSC A1120 / IAM 13836 / NRRL 3357 / JCM 12722 / SRRC 167), this protein is E3 ubiquitin ligase complex SCF subunit sconC (sconC).